Here is a 48-residue protein sequence, read N- to C-terminus: DNA-directed RNA polymerase subunit Rpo12 (48 aa).

Zn(2+) is bound by residues C9, C26, and C29.

The protein belongs to the archaeal Rpo12/eukaryotic RPC10 RNA polymerase subunit family. In terms of assembly, part of the RNA polymerase complex. Zn(2+) is required as a cofactor.

It is found in the cytoplasm. The catalysed reaction is RNA(n) + a ribonucleoside 5'-triphosphate = RNA(n+1) + diphosphate. In terms of biological role, DNA-dependent RNA polymerase (RNAP) catalyzes the transcription of DNA into RNA using the four ribonucleoside triphosphates as substrates. This Saccharolobus islandicus (strain Y.N.15.51 / Yellowstone #2) (Sulfolobus islandicus) protein is DNA-directed RNA polymerase subunit Rpo12.